The primary structure comprises 143 residues: MVKPDGVQRGLVGEVIQRFERRGYKLVAIKMMHASEQLLQTHYEALKSLSFFPKLVAYMSSGPVVPMVFEGRKVVENGRTMLGATKPEASCPGSIRGDYCQDVGRNVVHGSDSTESANREINLWFSPQELCQYKQAVDPWIHE.

Residues 1-132 (MVKPDGVQRG…LWFSPQELCQ (132 aa)) form the NDPK-like domain. 7 residues coordinate ADP: K3, F51, R79, T85, R96, V103, and N106. Positions 3, 51, 79, 85, and 96 each coordinate ATP. An ATP-binding site is contributed by N106. H109 serves as the catalytic Pros-phosphohistidine intermediate.

This sequence belongs to the NDK family. Homohexamer. Mg(2+) serves as cofactor.

It catalyses the reaction a 2'-deoxyribonucleoside 5'-diphosphate + ATP = a 2'-deoxyribonucleoside 5'-triphosphate + ADP. It carries out the reaction a ribonucleoside 5'-diphosphate + ATP = a ribonucleoside 5'-triphosphate + ADP. The catalysed reaction is GDP + ATP = GTP + ADP. The protein operates within purine metabolism; purine nucleotide biosynthesis. Functionally, major role in the synthesis of nucleoside triphosphates other than ATP. The ATP gamma phosphate is transferred to the NDP beta phosphate via a ping-pong mechanism, using a phosphorylated active-site intermediate. This is Nucleoside diphosphate kinase from Schistosoma mansoni (Blood fluke).